We begin with the raw amino-acid sequence, 433 residues long: UPF0597 protein PG_0909 (433 aa).

It belongs to the UPF0597 family.

The chain is UPF0597 protein PG_0909 from Porphyromonas gingivalis (strain ATCC BAA-308 / W83).